The chain runs to 133 residues: Small ribosomal subunit protein uS8 (133 aa).

Belongs to the universal ribosomal protein uS8 family. Part of the 30S ribosomal subunit. Contacts proteins S5 and S12.

Functionally, one of the primary rRNA binding proteins, it binds directly to 16S rRNA central domain where it helps coordinate assembly of the platform of the 30S subunit. The polypeptide is Small ribosomal subunit protein uS8 (Chloroflexus aggregans (strain MD-66 / DSM 9485)).